Here is a 376-residue protein sequence, read N- to C-terminus: Heterodimeric geranylgeranyl pyrophosphate synthase large subunit 2 (376 aa).

Residues 1 to 24 (MEPQILFLYLSLFILSLNFFFTNL) form the signal peptide. Residues Lys-125, Arg-128, and His-157 each contribute to the isopentenyl diphosphate site. Positions 164 and 170 each coordinate Mg(2+). Residue Arg-175 participates in dimethylallyl diphosphate binding. Arg-176 contributes to the isopentenyl diphosphate binding site. Dimethylallyl diphosphate contacts are provided by Lys-261, Thr-262, Gln-299, Lys-316, and Lys-326.

It belongs to the FPP/GGPP synthase family. In terms of assembly, monomer. Part of a heterodimeric geranyl(geranyl)diphosphate synthase. Interacts with GGR. Requires Mg(2+) as cofactor. Mainly expressed in flowers.

Its subcellular location is the endoplasmic reticulum. The catalysed reaction is isopentenyl diphosphate + dimethylallyl diphosphate = (2E)-geranyl diphosphate + diphosphate. It catalyses the reaction isopentenyl diphosphate + (2E)-geranyl diphosphate = (2E,6E)-farnesyl diphosphate + diphosphate. The enzyme catalyses isopentenyl diphosphate + (2E,6E)-farnesyl diphosphate = (2E,6E,10E)-geranylgeranyl diphosphate + diphosphate. It functions in the pathway isoprenoid biosynthesis; farnesyl diphosphate biosynthesis; farnesyl diphosphate from geranyl diphosphate and isopentenyl diphosphate: step 1/1. Its pathway is isoprenoid biosynthesis; geranyl diphosphate biosynthesis; geranyl diphosphate from dimethylallyl diphosphate and isopentenyl diphosphate: step 1/1. It participates in isoprenoid biosynthesis; geranylgeranyl diphosphate biosynthesis; geranylgeranyl diphosphate from farnesyl diphosphate and isopentenyl diphosphate: step 1/1. Heterodimeric geranyl(geranyl)-diphosphate (GPP) synthase large subunit. In vitro, the large subunit catalyzes mainly the trans-addition of the three molecules of IPP onto DMAPP to form geranylgeranyl pyrophosphate while the small subunit alone is inactive. Upon association of the two subunits, the product profile is not changed. The sequence is that of Heterodimeric geranylgeranyl pyrophosphate synthase large subunit 2 (GGPPS2) from Arabidopsis thaliana (Mouse-ear cress).